The chain runs to 136 residues: Large ribosomal subunit protein uL22 (136 aa).

The protein belongs to the universal ribosomal protein uL22 family. In terms of assembly, part of the 50S ribosomal subunit.

Its function is as follows. This protein binds specifically to 23S rRNA; its binding is stimulated by other ribosomal proteins, e.g. L4, L17, and L20. It is important during the early stages of 50S assembly. It makes multiple contacts with different domains of the 23S rRNA in the assembled 50S subunit and ribosome. Functionally, the globular domain of the protein is located near the polypeptide exit tunnel on the outside of the subunit, while an extended beta-hairpin is found that lines the wall of the exit tunnel in the center of the 70S ribosome. The polypeptide is Large ribosomal subunit protein uL22 (Bacteroides fragilis (strain ATCC 25285 / DSM 2151 / CCUG 4856 / JCM 11019 / LMG 10263 / NCTC 9343 / Onslow / VPI 2553 / EN-2)).